The chain runs to 224 residues: DNA repair and recombination protein RadB (224 aa).

The protein belongs to the eukaryotic RecA-like protein family. RadB subfamily.

Its function is as follows. Involved in DNA repair and in homologous recombination. May regulate the cleavage reactions of the branch-structured DNA. Has a very weak ATPase activity that is not stimulated by DNA. Binds DNA but does not promote DNA strands exchange. In Methanoculleus marisnigri (strain ATCC 35101 / DSM 1498 / JR1), this protein is DNA repair and recombination protein RadB.